A 475-amino-acid polypeptide reads, in one-letter code: Exodeoxyribonuclease 7 large subunit (475 aa).

The interval 452-475 (DHGLNRSSKSKRIKSKQDDQGTLF) is disordered. The span at 466 to 475 (SKQDDQGTLF) shows a compositional bias: basic and acidic residues.

The protein belongs to the XseA family. As to quaternary structure, heterooligomer composed of large and small subunits.

It is found in the cytoplasm. It catalyses the reaction Exonucleolytic cleavage in either 5'- to 3'- or 3'- to 5'-direction to yield nucleoside 5'-phosphates.. In terms of biological role, bidirectionally degrades single-stranded DNA into large acid-insoluble oligonucleotides, which are then degraded further into small acid-soluble oligonucleotides. The polypeptide is Exodeoxyribonuclease 7 large subunit (Bartonella quintana (strain Toulouse) (Rochalimaea quintana)).